The chain runs to 295 residues: Putative aquaporin-12B (295 aa).

Over 1–22 the chain is Cytoplasmic; sequence MAGLNVSLSFFFATFTLCEAAR. The chain crosses the membrane as a helical span at residues 23–41; the sequence is RASKALLPVGAYEVFAREA. Residues 42–55 lie on the Extracellular side of the membrane; that stretch reads MRTLVELGPWAGDF. Residues 56–74 form a helical membrane-spanning segment; it reads GPDLLLTLLFLLFLAHGVT. Residues 75 to 76 lie on the Cytoplasmic side of the membrane; sequence LD. Residues 77–114 constitute an intramembrane region (discontinuously helical); that stretch reads GASANPTVSLQEFLMAEESLPGTLLKLAAQGLGMQAAC. The NPA 1 signature appears at 81–83; that stretch reads NPT. The Cytoplasmic segment spans residues 115-120; it reads TLTRLC. A helical transmembrane segment spans residues 121-142; the sequence is WAWELSDLHLLQSLMAQSCSSA. The Extracellular segment spans residues 143–145; that stretch reads LRT. A helical membrane pass occupies residues 146 to 166; sequence SVPHGALVEAACAFCFHLTLL. Residues 167–174 are Cytoplasmic-facing; it reads HLRHSPPA. The chain crosses the membrane as a helical span at residues 175–191; that stretch reads YSGPAVALLVTVTAYTA. At 192-194 the chain is on the extracellular side; the sequence is GPF. An intramembrane region (discontinuously helical) is located at residues 195-206; that stretch reads TSAFFNPALAAS. Positions 200-202 match the NPA 2 motif; the sequence is NPA. At 207–223 the chain is on the extracellular side; sequence VTFACSGHTLLEYVQVY. A helical transmembrane segment spans residues 224 to 244; the sequence is WLGPLTGMVLAVLLHQGRLPH. The Cytoplasmic portion of the chain corresponds to 245-295; it reads LFQRNLFYGQKNKYRAPRGKPAPASGDTQTPAKGSSVREPGRSGVEGPHSS. The interval 257–295 is disordered; that stretch reads KYRAPRGKPAPASGDTQTPAKGSSVREPGRSGVEGPHSS.

It belongs to the MIP/aquaporin (TC 1.A.8) family. AQP11/AQP12 subfamily. As to quaternary structure, homotetramer; each monomer provides an independent water pore.

Its subcellular location is the membrane. It carries out the reaction H2O(in) = H2O(out). Its function is as follows. Putative aquaporin. Could form homotetrameric transmembrane channels, with each monomer independently mediating water transport across the plasma membrane along its osmotic gradient. The polypeptide is Putative aquaporin-12B (Homo sapiens (Human)).